The chain runs to 322 residues: MHGRAYLLLQRDFYDLKENNYKGITARPVSEDMMEWEVEIEGLQNSVWQGLVFQLTIHFTSEYNYAPPVVKFVTIPFHPNVDPHTGQPCIDFLDNPKKWNTNYTLSSILLALQVMLSNPVLENPVNLEAARILTKDESLYRTILKLFNRPLQMKDDSQELPKDPHKCIGPTKTTSFSDYYQAWSRIATSKATEYYRTALLKDPNFIGQYYKWKKMDLQHHKEWNLKYSVIKCWLARKNRMPDEVRHSMEGIKLCPTQIPTTDEIFLESPTAINSVTNIYETEEEGWKSDTSLYENNTDEPWEEEVEDLISWINTLNTNTLED.

Positions 4-153 constitute a UBC core domain; that stretch reads RAYLLLQRDF…LKLFNRPLQM (150 aa). Cys-89 serves as the catalytic Glycyl thioester intermediate.

This sequence belongs to the ubiquitin-conjugating enzyme family. Autoubiquitinated in vitro in the presence of UBR5.

It catalyses the reaction S-ubiquitinyl-[E1 ubiquitin-activating enzyme]-L-cysteine + [E2 ubiquitin-conjugating enzyme]-L-cysteine = [E1 ubiquitin-activating enzyme]-L-cysteine + S-ubiquitinyl-[E2 ubiquitin-conjugating enzyme]-L-cysteine.. It participates in protein modification; protein ubiquitination. Catalyzes the covalent attachment of ubiquitin to other proteins. This Macaca fascicularis (Crab-eating macaque) protein is Ubiquitin-conjugating enzyme E2 U (UBE2U).